The chain runs to 97 residues: Secreted transmembrane peptide 4 (97 aa).

The first 33 residues, 1-33 (MTKNMTKKKMGLMSPNIAAFVLPMLLVLFTISS), serve as a signal peptide directing secretion. The SCOOP motif motif lies at 54 to 67 (IVFTPPSSSCGGSP). The SxS motif essential for MIK2 binding motif lies at 60 to 62 (SSS). Residues 75-97 (WMPRRPCRRTRPPGTNIPVSQSP) are disordered.

Belongs to the serine rich endogenous peptide (SCOOP) phytocytokine family. In terms of assembly, interacts with MIK2 (via extracellular leucine-rich repeat domain); this interaction triggers the formation of complex between MIK2 and the BAK1/SERK3 and SERK4 coreceptors, and subsequent BAK1 activation by phosphorylation. In terms of tissue distribution, mostly expressed in leaves and stems, and, to a lower extent, in roots, siliques, seeds and flowers.

Its subcellular location is the cell membrane. It localises to the secreted. It is found in the extracellular space. The protein localises to the apoplast. Brassicaceae-specific phytocytokine (plant endogenous peptide released into the apoplast) perceived by MIK2 in a BAK1/SERK3 and SERK4 coreceptors-dependent manner, that modulates various physiological and antimicrobial processes including growth prevention and reactive oxygen species (ROS) response regulation. Prevents general growth and development. The chain is Secreted transmembrane peptide 4 from Arabidopsis thaliana (Mouse-ear cress).